The following is a 355-amino-acid chain: MINVLVVEDSPVVREFLIYILNSDPDITVIATAGDGEEAIDALRNHRPDVITMDIHMPKLNGVEATQLIMETQPTPIVIVSGSTDPAEVGTTFDAIDAGALAVLPRPAGIGHPDHEATARKMIEVVKLMSEVKVVRRWARMRGASPASHSVRAPLLNRVAPARIVVVGASTGGPPALEAILSSLPKHFPVPILIVQHMTTGFMEGFVQWLKNSSNLPVHIARQGELPLPGHVYMAPDEYQMKVENRGEIVLTKDEPEHGSRPSISYLFRAVARVYGHDAVAGLLTGMGRDGADELRLLKEKGAITFAQDKESSVVHGMAGEAIRLGAATMVLPLEKIAAALTNLVAERGETKLGA.

Positions 3–121 (NVLVVEDSPV…HPDHEATARK (119 aa)) constitute a Response regulatory domain. Asp54 is modified (4-aspartylphosphate). Positions 154–348 (PLLNRVAPAR…AALTNLVAER (195 aa)) constitute a CheB-type methylesterase domain. Catalysis depends on residues Ser170, His197, and Asp290.

It belongs to the CheB family. Post-translationally, phosphorylated by CheA. Phosphorylation of the N-terminal regulatory domain activates the methylesterase activity.

The protein resides in the cytoplasm. It carries out the reaction [protein]-L-glutamate 5-O-methyl ester + H2O = L-glutamyl-[protein] + methanol + H(+). The enzyme catalyses L-glutaminyl-[protein] + H2O = L-glutamyl-[protein] + NH4(+). Involved in chemotaxis. Part of a chemotaxis signal transduction system that modulates chemotaxis in response to various stimuli. Catalyzes the demethylation of specific methylglutamate residues introduced into the chemoreceptors (methyl-accepting chemotaxis proteins or MCP) by CheR. Also mediates the irreversible deamidation of specific glutamine residues to glutamic acid. The sequence is that of Protein-glutamate methylesterase/protein-glutamine glutaminase from Nitrosospira multiformis (strain ATCC 25196 / NCIMB 11849 / C 71).